The sequence spans 323 residues: tRNA U34 carboxymethyltransferase (323 aa).

Carboxy-S-adenosyl-L-methionine contacts are provided by residues K91, W105, K110, G130, 152-154, 181-182, M196, Y200, and R315; these read DPT and IE.

Belongs to the class I-like SAM-binding methyltransferase superfamily. CmoB family. In terms of assembly, homotetramer.

The catalysed reaction is carboxy-S-adenosyl-L-methionine + 5-hydroxyuridine(34) in tRNA = 5-carboxymethoxyuridine(34) in tRNA + S-adenosyl-L-homocysteine + H(+). In terms of biological role, catalyzes carboxymethyl transfer from carboxy-S-adenosyl-L-methionine (Cx-SAM) to 5-hydroxyuridine (ho5U) to form 5-carboxymethoxyuridine (cmo5U) at position 34 in tRNAs. This chain is tRNA U34 carboxymethyltransferase, found in Escherichia fergusonii (strain ATCC 35469 / DSM 13698 / CCUG 18766 / IAM 14443 / JCM 21226 / LMG 7866 / NBRC 102419 / NCTC 12128 / CDC 0568-73).